Reading from the N-terminus, the 420-residue chain is uncharacterized protein (420 aa).

It belongs to the mimivirus R160 family.

Its subcellular location is the virion. This is an uncharacterized protein from Acanthamoeba polyphaga mimivirus (APMV).